A 1603-amino-acid chain; its full sequence is MKSIIIASLVALAIAASPALDRTFSPKSEYVYKFDGLLLSGLPTASSDASQTLISCRTRLQAVDDRYIHLQLTDIQYSASHIPQSEQWPKIESLEQRELSDEFKELLELPFRAQIRNGLISEIQFSSEDAEWSKNAKRSILNLFSLRKSAPVDEMNQDQKDMESDKDSLFFNVHEKTMEGDCEVAYTIVQEGEKTIYTKSVNFDKCITRPETAYGLRFGSECKECEKEGQFVKPQTVYTYTFKNEKLQESEVHSVYTLNVNGQEVVKSETRAKVTFVEESKINREIKKVSGPKEEIVYSMENEKLIEQFYQQGDKAEVNPFKAIEMEQKVEQLQEIFRQIQEHEQNTPETVHLIARAVRMFRMCTIEELKKVHTTIYTKAEKKVQLVIETTLAVAGTKNTIQHLIHHFEKKSITPLRAAELLKSVQETLYPSEHIADLLIQLAQSPLSEKYEPLRQSAWLAAGSVVRGFASKTQDLPLIRPASRQTKEKYVRVFMQHFRNADSTYEKVLALKTLGNAGIDLSVYELVQIIQDPRQPLSIRTEAVDALRLLKDVMPRKIQKVLLPVYKNRQNKPELRMAALWRMMHTIPEEPVLAHIVSQMENESNQHVAAFTYNVLRQFYKSTNPCYQQLAVRCSKILLFTRYQPQEQMLSTYSQLPLFNSEWLSGVQFDFATIFEKNAFLPKEVQASFETVFGGNWNKYFAQVGFSQQNFEQVILKTLEKLSLYGKQSDELRSRRVQSGIQMLQEIVKKMNIRPRVQQTDSQNAHAVFYLRYKEMDYIVLPIDMETIDTLVEKYVRNGEFDIKSLLTFLTNDSKFELHRALFFYEAERRIPTTIGMPLTISGKMPTILSINGKVSIELEKLGARLVLDIVPTVATTHVTEMRFWYPVIEQGVKSLQSARLHTPLRFESTVELKKNTLEITHKFVVPENKKTTVSVHTRPVAFIRVPKNQDSEYVEAEEKTISHSQYQMSTEEIDRQYETFGLRINAQGNVLSQWTLPMVLMTEQDFEYTLENKNRPVEFTARVTIGNLEKTDLSEIKFDKIFEKEFDLENNESENRRQYFHKMIREIQSEQGFKNLITLKLEAPQQMYWNTELRTVCDKWIRMCKVEMDARRSPMEHENKEWTLRTELLAARPQMPSSLRQLREQPHREVQLAFNAKWGSSKKSEITVNAQLEQSTEQKKFIRNIEREYKGIPEYELLIKAARLNQVNVVSEYKLTPQSEYTFSRIFDLIKAYNFWTVSEKRVQNENRRVVLQLSVEPLSRQYMNMTIQTPEQEVELKNVRIPRVVLPTIARSAMFQQTWEKTGATCKVDQSEVSTFDNVIYRAPLTTCYSLVAKDCSEQPRFAVLAKKINKNSEELLVKVVRREEEIVVKKSDDKFLVKVDGKKVNPTELEQYNIEILGDNLIVIRLPQGEVRFDGYTVKTNMPSVASQNQLCGLCGNNDGERDNEFMTADNYETEDVEEFHRSYLLKNEECEVENDRISEKKNYRNKWNREEKKSDYESSSDYESNYDEKETEKELVKKTLIKEFSNRVCFSIEPVSECRRGLESEKTSNKKIRFTCMPRHSKNARRFLKEAREQTVAELVDFPVSFVESVKIPTACVAY.

The signal sequence occupies residues M1–A15. A Vitellogenin domain is found at F24–V685. Positions A1306–E1475 constitute a VWFD domain. 2 disulfide bridges follow: C1308/C1438 and C1330/C1474. The segment at N1492–K1513 is disordered.

In terms of processing, vitellogenin 5 undergoes little if any processing before being packaged into yolk platelets. In terms of tissue distribution, expressed in the intestine of adult hermaphrodites.

Its subcellular location is the secreted. In terms of biological role, precursor of the egg-yolk proteins that are sources of nutrients during embryonic development. Together with other vitellogenins, may play a role in modulating life-span, acting via induction of autophagy and lysosomal lipolysis. In Caenorhabditis elegans, this protein is Vitellogenin-5 (vit-5).